A 188-amino-acid chain; its full sequence is UPF0157 protein VC_A0354 (188 aa).

It belongs to the UPF0157 (GrpB) family.

This chain is UPF0157 protein VC_A0354, found in Vibrio cholerae serotype O1 (strain ATCC 39315 / El Tor Inaba N16961).